A 99-amino-acid polypeptide reads, in one-letter code: Defensin-A4 (99 aa).

A signal peptide spans 1–21 (MKTLCLLFAVLCLVTWTQARG). Positions 22 to 68 (AEVEENLTAQDGEVDIAGDNGDVQLTLNTDDFESFTLKTLTLGHPRV) are excised as a propeptide. Intrachain disulfides connect Cys-73/Cys-97, Cys-75/Cys-89, and Cys-79/Cys-96.

Belongs to the alpha-defensin family. As to expression, lowly expressed in spleen, and expressed at lower levels in kidney and lung.

It localises to the secreted. Its function is as follows. Has antimicrobial activity. This chain is Defensin-A4, found in Ornithorhynchus anatinus (Duckbill platypus).